The sequence spans 603 residues: Cdc42-interacting protein 4 (603 aa).

Positions 1–117 (MDWGTELWDQ…EMKQERKMHF (117 aa)) are required for podosome formation and interaction with AKAP9 and microtubules. Residues 1–117 (MDWGTELWDQ…EMKQERKMHF (117 aa)) are required for translocation to the plasma membrane in response to insulin. Residues 1–264 (MDWGTELWDQ…AAESVDAKND (264 aa)) form the F-BAR domain. Positions 67 to 259 (FSQQQSFVQL…EGMKVAAESV (193 aa)) form a coiled coil. The tract at residues 293-539 (RVPSDSSLGT…YTEFDEDFEE (247 aa)) is interaction with CDC42. Residues 293 to 603 (RVPSDSSLGT…PTSYLRVTLN (311 aa)) form an interaction with PDE6G region. Residues 295 to 358 (PSDSSLGTPD…PSSPRSGRDP (64 aa)) are disordered. 3 positions are modified to phosphoserine: Ser-296, Ser-298, and Ser-299. A compositionally biased stretch (basic residues) spans 316–329 (SRAKRWPFGKKNKP). The segment covering 333-346 (SLSLLGGHLPSTLS) has biased composition (low complexity). Phosphoserine is present on residues Ser-335 and Ser-351. A coiled-coil region spans residues 388–481 (TEDFSHLPPE…ESRVLSNRGD (94 aa)). Residues 393–470 (HLPPEQQRKR…VQKYEAWLAE (78 aa)) form the REM-1 domain. A required for interaction with FASLG and localization to lysosomes region spans residues 471 to 603 (AESRVLSNRG…PTSYLRVTLN (133 aa)). Residues 477–541 (SNRGDSLSRH…EFDEDFEEPA (65 aa)) are disordered. Position 482 is a phosphoserine (Ser-482). Positions 487 to 543 (ARPPDPPTTAPPDSSSSSTNSGSQDNKESSSEEPPSEGQDTPIYTEFDEDFEEPASP) are interaction with DNM2 and WASL. Positions 497 to 510 (PPDSSSSSTNSGSQ) are enriched in low complexity. The segment at 532 to 603 (EFDEDFEEPA…PTSYLRVTLN (72 aa)) is interaction with DNM1 and WASL. Residues 540-603 (PASPIGQCVA…PTSYLRVTLN (64 aa)) are required for podosome formation. In terms of domain architecture, SH3 spans 542 to 603 (SPIGQCVAIY…PTSYLRVTLN (62 aa)). An interaction with WAS region spans residues 546-603 (QCVAIYHFEGSSEGTVSMSEGEDLSLMEEDKGDGWTRVRRKQGAEGYVPTSYLRVTLN). Positions 548–603 (VAIYHFEGSSEGTVSMSEGEDLSLMEEDKGDGWTRVRRKQGAEGYVPTSYLRVTLN) are interaction with ARHGAP17, DAAM1, DIAPH1 and DIAPH2.

Belongs to the FNBP1 family. In terms of assembly, homodimerizes, the dimers can polymerize end-to-end to form filamentous structures. Interacts with AKAP9, ARHGAP17, DAAM1, DIAPH1, DIAPH2, DNM1, FASLG/FASL, GAPVD1, LYN, microtubules, PDE6G, SRC and WAS/WASP. Interacts with the ligand binding domain of the thyroid receptor (TR) in the presence of thyroid hormone. May interact with CTNNB1 and HD/HTT. Interacts specifically with GTP-bound CDC42 and RHOQ. Interacts with DNM2 and WASL. Post-translationally, tyrosine phosphorylated. Also phosphorylated by PKA.

Its subcellular location is the cytoplasm. It localises to the cytoskeleton. The protein localises to the cell cortex. The protein resides in the lysosome. It is found in the golgi apparatus. Its subcellular location is the cell membrane. It localises to the cell projection. The protein localises to the phagocytic cup. Required to coordinate membrane tubulation with reorganization of the actin cytoskeleton during endocytosis. Binds to lipids such as phosphatidylinositol 4,5-bisphosphate and phosphatidylserine and promotes membrane invagination and the formation of tubules. Also promotes CDC42-induced actin polymerization by recruiting WASL/N-WASP which in turn activates the Arp2/3 complex. Actin polymerization may promote the fission of membrane tubules to form endocytic vesicles. Required for the formation of podosomes, actin-rich adhesion structures specific to monocyte-derived cells. May be required for the lysosomal retention of FASLG/FASL. Required for translocation of GLUT4 to the plasma membrane in response to insulin signaling. The polypeptide is Cdc42-interacting protein 4 (Trip10) (Mus musculus (Mouse)).